A 135-amino-acid chain; its full sequence is L-ectoine synthase (135 aa).

Belongs to the ectoine synthase family.

The enzyme catalyses (2S)-4-acetamido-2-aminobutanoate = L-ectoine + H2O. It functions in the pathway amine and polyamine biosynthesis; ectoine biosynthesis; L-ectoine from L-aspartate 4-semialdehyde: step 3/3. Its function is as follows. Catalyzes the circularization of gamma-N-acetyl-alpha,gamma-diaminobutyric acid (ADABA) to ectoine (1,4,5,6-tetrahydro-2-methyl-4-pyrimidine carboxylic acid), which is an excellent osmoprotectant. The chain is L-ectoine synthase from Saccharopolyspora erythraea (strain ATCC 11635 / DSM 40517 / JCM 4748 / NBRC 13426 / NCIMB 8594 / NRRL 2338).